We begin with the raw amino-acid sequence, 122 residues long: Large ribosomal subunit protein uL14 (122 aa).

It belongs to the universal ribosomal protein uL14 family. As to quaternary structure, part of the 50S ribosomal subunit. Forms a cluster with proteins L3 and L19. In the 70S ribosome, L14 and L19 interact and together make contacts with the 16S rRNA in bridges B5 and B8.

Functionally, binds to 23S rRNA. Forms part of two intersubunit bridges in the 70S ribosome. The protein is Large ribosomal subunit protein uL14 of Helicobacter acinonychis (strain Sheeba).